A 317-amino-acid chain; its full sequence is Testis-specific Y-encoded protein 1 (317 aa).

Disordered regions lie at residues 1 to 39 and 91 to 118; these read MSRP…FQVV and DEEQ…PGGP. Composition is skewed to basic and acidic residues over residues 15–26 and 95–112; these read QGQEERERRSEE and EQRP…EQGQ.

This sequence belongs to the nucleosome assembly protein (NAP) family. Post-translationally, phosphorylated. As to expression, testis. Probably in spermatogonia.

It localises to the cytoplasm. The protein resides in the nucleus. Its function is as follows. May be involved in sperm differentiation and proliferation. In Bos taurus (Bovine), this protein is Testis-specific Y-encoded protein 1 (TSPY1).